The sequence spans 338 residues: Glycerol-3-phosphate dehydrogenase [NAD(P)+] (338 aa).

Ser13, Trp14, and Lys108 together coordinate NADPH. The sn-glycerol 3-phosphate site is built by Lys108, Gly139, and Ser141. Residue Ala143 participates in NADPH binding. 5 residues coordinate sn-glycerol 3-phosphate: Lys194, Asp247, Ser257, Arg258, and Asn259. Residue Lys194 is the Proton acceptor of the active site. Arg258 is a binding site for NADPH. NADPH is bound by residues Val282 and Glu284.

This sequence belongs to the NAD-dependent glycerol-3-phosphate dehydrogenase family.

The protein resides in the cytoplasm. The catalysed reaction is sn-glycerol 3-phosphate + NAD(+) = dihydroxyacetone phosphate + NADH + H(+). It carries out the reaction sn-glycerol 3-phosphate + NADP(+) = dihydroxyacetone phosphate + NADPH + H(+). It functions in the pathway membrane lipid metabolism; glycerophospholipid metabolism. Functionally, catalyzes the reduction of the glycolytic intermediate dihydroxyacetone phosphate (DHAP) to sn-glycerol 3-phosphate (G3P), the key precursor for phospholipid synthesis. This is Glycerol-3-phosphate dehydrogenase [NAD(P)+] from Streptococcus pneumoniae (strain Hungary19A-6).